Here is a 241-residue protein sequence, read N- to C-terminus: Small ribosomal subunit protein uS2 (241 aa).

This sequence belongs to the universal ribosomal protein uS2 family.

The chain is Small ribosomal subunit protein uS2 from Pectobacterium carotovorum subsp. carotovorum (strain PC1).